Reading from the N-terminus, the 432-residue chain is Tol-Pal system protein TolB (432 aa).

The first 21 residues, 1–21, serve as a signal peptide directing secretion; the sequence is MSTLIRIALFALALMAGAAQA.

It belongs to the TolB family. In terms of assembly, the Tol-Pal system is composed of five core proteins: the inner membrane proteins TolA, TolQ and TolR, the periplasmic protein TolB and the outer membrane protein Pal. They form a network linking the inner and outer membranes and the peptidoglycan layer.

It localises to the periplasm. Part of the Tol-Pal system, which plays a role in outer membrane invagination during cell division and is important for maintaining outer membrane integrity. The protein is Tol-Pal system protein TolB of Pseudomonas aeruginosa (strain ATCC 15692 / DSM 22644 / CIP 104116 / JCM 14847 / LMG 12228 / 1C / PRS 101 / PAO1).